The chain runs to 361 residues: UDP-3-O-acylglucosamine N-acyltransferase (361 aa).

Catalysis depends on His-253, which acts as the Proton acceptor.

It belongs to the transferase hexapeptide repeat family. LpxD subfamily. In terms of assembly, homotrimer.

The catalysed reaction is a UDP-3-O-[(3R)-3-hydroxyacyl]-alpha-D-glucosamine + a (3R)-hydroxyacyl-[ACP] = a UDP-2-N,3-O-bis[(3R)-3-hydroxyacyl]-alpha-D-glucosamine + holo-[ACP] + H(+). It functions in the pathway bacterial outer membrane biogenesis; LPS lipid A biosynthesis. Its function is as follows. Catalyzes the N-acylation of UDP-3-O-acylglucosamine using 3-hydroxyacyl-ACP as the acyl donor. Is involved in the biosynthesis of lipid A, a phosphorylated glycolipid that anchors the lipopolysaccharide to the outer membrane of the cell. This Burkholderia thailandensis (strain ATCC 700388 / DSM 13276 / CCUG 48851 / CIP 106301 / E264) protein is UDP-3-O-acylglucosamine N-acyltransferase.